Reading from the N-terminus, the 124-residue chain is Small ribosomal subunit protein uS12cz/uS12cy (124 aa).

This sequence belongs to the universal ribosomal protein uS12 family. Part of the 30S ribosomal subunit.

The protein resides in the plastid. The protein localises to the chloroplast. Functionally, with S4 and S5 plays an important role in translational accuracy. Located at the interface of the 30S and 50S subunits. This is Small ribosomal subunit protein uS12cz/uS12cy (rps12-A) from Zea mays (Maize).